A 236-amino-acid polypeptide reads, in one-letter code: MATTHLDVCAVVPAAGFGRRMQTECPKQYLSIGNQTILEHSVHALLAHPRVKRVVIAISPGDSRFAQLPLANHPQITVVDGGEERADSVLAGLKAAGDAQWVLVHDAARPCLHQDDLARLLALSETSRTGGILAAPVRDTMKRAETGKNAIAHTVDRNGLWHALTPQFFPRELLHDCLTRALNEGATITDEASALEYCGFHPQLVEGRADNIKVTRPEDLALAEFYLTRTIHQENT.

The protein belongs to the IspD/TarI cytidylyltransferase family. IspD subfamily. As to quaternary structure, homodimer.

It carries out the reaction 2-C-methyl-D-erythritol 4-phosphate + CTP + H(+) = 4-CDP-2-C-methyl-D-erythritol + diphosphate. Its pathway is isoprenoid biosynthesis; isopentenyl diphosphate biosynthesis via DXP pathway; isopentenyl diphosphate from 1-deoxy-D-xylulose 5-phosphate: step 2/6. Its function is as follows. Catalyzes the formation of 4-diphosphocytidyl-2-C-methyl-D-erythritol from CTP and 2-C-methyl-D-erythritol 4-phosphate (MEP). The polypeptide is 2-C-methyl-D-erythritol 4-phosphate cytidylyltransferase (Escherichia coli O127:H6 (strain E2348/69 / EPEC)).